The sequence spans 86 residues: MNSKIFAVLLLLGLLSCVLSDQYCPKSSITACKKMNIRNDCCKDDDCTGGSWCCATPCGNFCKYPTDRPGGKRAAGGKSCKTGYVY.

The signal sequence occupies residues 1 to 20 (MNSKIFAVLLLLGLLSCVLS). Residues 21–66 (DQYCPKSSITACKKMNIRNDCCKDDDCTGGSWCCATPCGNFCKYPT) form the WAP domain. 5 disulfide bridges follow: Cys-24-Cys-54, Cys-32-Cys-58, Cys-41-Cys-53, Cys-42-Cys-80, and Cys-47-Cys-62.

Belongs to the venom protein 11 family. 01 (wap-1) subfamily. In terms of processing, contains 5 disulfide bonds. In terms of tissue distribution, expressed by the venom gland.

The protein resides in the secreted. Functionally, has antibacterial activity. In Lycosa singoriensis (Wolf spider), this protein is U15-lycotoxin-Ls1d.